Reading from the N-terminus, the 319-residue chain is Beta-ketoacyl-[acyl-carrier-protein] synthase III (319 aa).

Residues Cys112 and His246 contribute to the active site. An ACP-binding region spans residues 247–251 (QANKR). The active site involves Asn276.

This sequence belongs to the thiolase-like superfamily. FabH family. As to quaternary structure, homodimer.

Its subcellular location is the cytoplasm. It carries out the reaction malonyl-[ACP] + acetyl-CoA + H(+) = 3-oxobutanoyl-[ACP] + CO2 + CoA. Its pathway is lipid metabolism; fatty acid biosynthesis. Its function is as follows. Catalyzes the condensation reaction of fatty acid synthesis by the addition to an acyl acceptor of two carbons from malonyl-ACP. Catalyzes the first condensation reaction which initiates fatty acid synthesis and may therefore play a role in governing the total rate of fatty acid production. Possesses both acetoacetyl-ACP synthase and acetyl transacylase activities. Its substrate specificity determines the biosynthesis of branched-chain and/or straight-chain of fatty acids. This chain is Beta-ketoacyl-[acyl-carrier-protein] synthase III, found in Psychromonas ingrahamii (strain DSM 17664 / CCUG 51855 / 37).